Here is a 76-residue protein sequence, read N- to C-terminus: Sulfur carrier protein TusA (76 aa).

The Cysteine persulfide intermediate role is filled by Cys-15.

This sequence belongs to the sulfur carrier protein TusA family. In terms of assembly, mostly a monomer, a small portion forms homodimer via intermolecular disulfide bonds. Tightly interacts with DsrEFH.

The protein localises to the cytoplasm. The protein operates within energy metabolism; sulfur metabolism. Functionally, sulfur carrier protein involved in sulfur trafficking for oxidative dissimilatory sulfur metabolism. Component of a sulfur relay system that starts with the sulfur-mobilizing rhodanese-like protein Rhd_2599 (Alvin_2599), which transfers the sulfur from a low-molecular-weight thiol, maybe glutathione, to the TusA protein (Alvin_2600); TusA serves as the sulfur donor for DsrEFH, which persulfurates DsrC; persulfurated DsrC very probably serves as a direct substrate for reverse-acting sulfite reductase, DsrAB. TusA seems to be not exclusively dedicated to sulfur oxidation and may have other important roles in the cell. Might also act as a sulfur mediator required for 2-thiouridine formation of tRNA. This chain is Sulfur carrier protein TusA, found in Allochromatium vinosum (strain ATCC 17899 / DSM 180 / NBRC 103801 / NCIMB 10441 / D) (Chromatium vinosum).